The following is a 444-amino-acid chain: Phosphoglucosamine mutase (444 aa).

S101 (phosphoserine intermediate) is an active-site residue. The Mg(2+) site is built by S101, D240, D242, and D244. Phosphoserine is present on S101.

It belongs to the phosphohexose mutase family. It depends on Mg(2+) as a cofactor. In terms of processing, activated by phosphorylation.

It carries out the reaction alpha-D-glucosamine 1-phosphate = D-glucosamine 6-phosphate. Its function is as follows. Catalyzes the conversion of glucosamine-6-phosphate to glucosamine-1-phosphate. This is Phosphoglucosamine mutase from Photobacterium profundum (strain SS9).